A 469-amino-acid polypeptide reads, in one-letter code: Ubiquitin carboxyl-terminal hydrolase MINDY-1 (469 aa).

Residues 1–85 (MEYHQPEDPA…APPGPTLGTL (85 aa)) form a disordered region. Basic and acidic residues predominate over residues 23–53 (ENHEVLAGPDEHPQDTDARDADGEAREREPA). The segment covering 66–76 (LESPLPEASSA) has biased composition (low complexity). Residue Ser-103 is modified to Phosphoserine. Cys-137 (nucleophile) is an active-site residue. The active-site Proton acceptor is His-319. Residues 388 to 426 (QVDQDYLIALSLQQQQPRGPLGLTDLELAQQLQQEEYQQ) are ubiquitin-binding domain (UBD). Residue Ser-441 is modified to Phosphoserine. The interval 441-469 (SLQGRGATSGRPAGERRQRPKHESDCILL) is disordered. Basic and acidic residues predominate over residues 453–469 (AGERRQRPKHESDCILL).

The protein belongs to the MINDY deubiquitinase family. FAM63 subfamily.

The enzyme catalyses Thiol-dependent hydrolysis of ester, thioester, amide, peptide and isopeptide bonds formed by the C-terminal Gly of ubiquitin (a 76-residue protein attached to proteins as an intracellular targeting signal).. Hydrolase that can specifically remove 'Lys-48'-linked conjugated ubiquitin from proteins. Has exodeubiquitinase activity and has a preference for long polyubiquitin chains. May play a regulatory role at the level of protein turnover. The polypeptide is Ubiquitin carboxyl-terminal hydrolase MINDY-1 (Homo sapiens (Human)).